Here is a 1690-residue protein sequence, read N- to C-terminus: DNA-directed RNA polymerase subunit beta' (1690 aa).

Zn(2+) contacts are provided by Cys63, Cys65, Cys78, and Cys81. Residues Asp753, Asp755, and Asp757 each coordinate Mg(2+). Zn(2+) contacts are provided by Cys1107, Cys1295, Cys1302, and Cys1305.

It belongs to the RNA polymerase beta' chain family. In terms of assembly, the RNAP catalytic core consists of 2 alpha, 1 beta, 1 beta' and 1 omega subunit. When a sigma factor is associated with the core the holoenzyme is formed, which can initiate transcription. Requires Mg(2+) as cofactor. It depends on Zn(2+) as a cofactor.

The catalysed reaction is RNA(n) + a ribonucleoside 5'-triphosphate = RNA(n+1) + diphosphate. Functionally, DNA-dependent RNA polymerase catalyzes the transcription of DNA into RNA using the four ribonucleoside triphosphates as substrates. The protein is DNA-directed RNA polymerase subunit beta' of Thermotoga sp. (strain RQ2).